Reading from the N-terminus, the 170-residue chain is Protein HemX (170 aa).

A compositionally biased stretch (polar residues) spans 1–17; sequence MTEQKNTNENDLQNGTS. Residues 1–24 form a disordered region; the sequence is MTEQKNTNENDLQNGTSKADDDIR. The helical transmembrane segment at 37–57 threads the bilayer; that stretch reads GLIGSAVAILVILAIGGGLYY.

Its subcellular location is the cell membrane. The sequence is that of Protein HemX from Proteus mirabilis.